We begin with the raw amino-acid sequence, 239 residues long: Ribosomal RNA small subunit methyltransferase G (239 aa).

S-adenosyl-L-methionine is bound by residues G77, F82, 128 to 129, and R147; that span reads AE. The disordered stretch occupies residues 219–239; the sequence is RKTPKKYPRKPGTPNKLPIEK.

Belongs to the methyltransferase superfamily. RNA methyltransferase RsmG family.

It is found in the cytoplasm. In terms of biological role, specifically methylates the N7 position of guanine in position 535 of 16S rRNA. This chain is Ribosomal RNA small subunit methyltransferase G, found in Bacillus cytotoxicus (strain DSM 22905 / CIP 110041 / 391-98 / NVH 391-98).